The chain runs to 437 residues: Eukaryotic peptide chain release factor subunit 1 (437 aa).

Q182 is subject to N5-methylglutamine. K331 participates in a covalent cross-link: Glycyl lysine isopeptide (Lys-Gly) (interchain with G-Cter in ubiquitin). S421 carries the post-translational modification Phosphoserine.

This sequence belongs to the eukaryotic release factor 1 family. Component of the eRF1-eRF3-GTP ternary complex, composed of SUP45/eRF1, SUP35/eRF3 and GTP. Interacts with TPA1. Post-translationally, N5-methylated on Gln-182 by MTQ2.

It localises to the cytoplasm. Functionally, component of the eRF1-eRF3-GTP ternary complex, a ternary complex that mediates translation termination in response to the termination codons. The eRF1-eRF3-GTP complex binds to a stop codon in the ribosomal A-site. SUP45/eRF1 is responsible for stop codon recognition and inducing hydrolysis of peptidyl-tRNA. Following GTP hydrolysis by SUP35/eRF3, SUP35/eRF3 dissociates, permitting SUP45/eRF1 to accommodate fully in the A-site and mediate hydrolysis of peptidyl-tRNA. The chain is Eukaryotic peptide chain release factor subunit 1 (SUP45) from Saccharomyces cerevisiae (strain ATCC 204508 / S288c) (Baker's yeast).